The primary structure comprises 640 residues: Biosynthetic arginine decarboxylase (640 aa).

An N6-(pyridoxal phosphate)lysine modification is found at K109. Substrate is bound at residue 291-301 (LDVGGGLGVDY).

It belongs to the Orn/Lys/Arg decarboxylase class-II family. SpeA subfamily. Mg(2+) serves as cofactor. It depends on pyridoxal 5'-phosphate as a cofactor.

The enzyme catalyses L-arginine + H(+) = agmatine + CO2. It participates in amine and polyamine biosynthesis; agmatine biosynthesis; agmatine from L-arginine: step 1/1. Catalyzes the biosynthesis of agmatine from arginine. The sequence is that of Biosynthetic arginine decarboxylase from Synechococcus sp. (strain RCC307).